We begin with the raw amino-acid sequence, 247 residues long: 2,5-diamino-6-ribosylamino-4(3H)-pyrimidinone 5'-phosphate reductase (247 aa).

NADP(+) is bound by residues threonine 75, aspartate 79, glycine 165, and 187–191 (GASII).

It belongs to the HTP reductase family. Homodimer.

It catalyses the reaction 2,5-diamino-6-(1-D-ribitylamino)pyrimidin-4(3H)-one 5'-phosphate + NADP(+) = 2,5-diamino-6-(1-D-ribosylamino)pyrimidin-4(3H)-one 5'-phosphate + NADPH + H(+). It carries out the reaction 2,5-diamino-6-(1-D-ribitylamino)pyrimidin-4(3H)-one 5'-phosphate + NAD(+) = 2,5-diamino-6-(1-D-ribosylamino)pyrimidin-4(3H)-one 5'-phosphate + NADH + H(+). Its pathway is cofactor biosynthesis; riboflavin biosynthesis. Its function is as follows. Catalyzes an early step in riboflavin biosynthesis, the NADPH-dependent reduction of the ribose side chain of 2,5-diamino-6-ribosylamino-4(3H)-pyrimidinone 5'-phosphate, yielding 2,5-diamino-6-ribitylamino-4(3H)-pyrimidinone 5'-phosphate. The sequence is that of 2,5-diamino-6-ribosylamino-4(3H)-pyrimidinone 5'-phosphate reductase (RIB7) from Debaryomyces hansenii (strain ATCC 36239 / CBS 767 / BCRC 21394 / JCM 1990 / NBRC 0083 / IGC 2968) (Yeast).